The sequence spans 753 residues: 5-methyltetrahydropteroyltriglutamate--homocysteine methyltransferase (753 aa).

5-methyltetrahydropteroyltri-L-glutamate contacts are provided by residues 17-20 (RELK) and K117. L-homocysteine contacts are provided by residues 431–433 (IGS) and E484. L-methionine contacts are provided by residues 431–433 (IGS) and E484. 5-methyltetrahydropteroyltri-L-glutamate contacts are provided by residues 515 to 516 (RC) and W561. D599 is a binding site for L-homocysteine. L-methionine is bound at residue D599. E605 lines the 5-methyltetrahydropteroyltri-L-glutamate pocket. Residues H641, C643, and E665 each coordinate Zn(2+). The active-site Proton donor is the H694. C726 contacts Zn(2+).

The protein belongs to the vitamin-B12 independent methionine synthase family. Requires Zn(2+) as cofactor.

It catalyses the reaction 5-methyltetrahydropteroyltri-L-glutamate + L-homocysteine = tetrahydropteroyltri-L-glutamate + L-methionine. It functions in the pathway amino-acid biosynthesis; L-methionine biosynthesis via de novo pathway; L-methionine from L-homocysteine (MetE route): step 1/1. Its function is as follows. Catalyzes the transfer of a methyl group from 5-methyltetrahydrofolate to homocysteine resulting in methionine formation. The protein is 5-methyltetrahydropteroyltriglutamate--homocysteine methyltransferase of Escherichia coli O8 (strain IAI1).